Consider the following 502-residue polypeptide: ATP synthase subunit alpha (502 aa).

The tract at residues 115-138 is disordered; the sequence is VDGLGPIETTETRPIESPAPGVMD. ATP is bound at residue 169–176; sequence GDRQTGKT.

The protein belongs to the ATPase alpha/beta chains family. As to quaternary structure, F-type ATPases have 2 components, CF(1) - the catalytic core - and CF(0) - the membrane proton channel. CF(1) has five subunits: alpha(3), beta(3), gamma(1), delta(1), epsilon(1). CF(0) has three main subunits: a(1), b(2) and c(9-12). The alpha and beta chains form an alternating ring which encloses part of the gamma chain. CF(1) is attached to CF(0) by a central stalk formed by the gamma and epsilon chains, while a peripheral stalk is formed by the delta and b chains.

It localises to the cell membrane. The enzyme catalyses ATP + H2O + 4 H(+)(in) = ADP + phosphate + 5 H(+)(out). In terms of biological role, produces ATP from ADP in the presence of a proton gradient across the membrane. The alpha chain is a regulatory subunit. The polypeptide is ATP synthase subunit alpha (Geobacillus sp. (strain WCH70)).